The primary structure comprises 117 residues: uncharacterized protein (117 aa).

This is an uncharacterized protein from Encephalitozoon cuniculi (strain GB-M1) (Microsporidian parasite).